A 357-amino-acid polypeptide reads, in one-letter code: DNA primase small subunit PriS (357 aa).

Residues Asp105, Asp107, and Asp259 contribute to the active site.

The protein belongs to the eukaryotic-type primase small subunit family. In terms of assembly, heterodimer of a small subunit (PriS) and a large subunit (PriL). It depends on Mg(2+) as a cofactor. Requires Mn(2+) as cofactor.

In terms of biological role, catalytic subunit of DNA primase, an RNA polymerase that catalyzes the synthesis of short RNA molecules used as primers for DNA polymerase during DNA replication. The small subunit contains the primase catalytic core and has DNA synthesis activity on its own. Binding to the large subunit stabilizes and modulates the activity, increasing the rate of DNA synthesis while decreasing the length of the DNA fragments, and conferring RNA synthesis capability. The DNA polymerase activity may enable DNA primase to also catalyze primer extension after primer synthesis. May also play a role in DNA repair. The protein is DNA primase small subunit PriS of Methanococcus maripaludis (strain C5 / ATCC BAA-1333).